A 571-amino-acid chain; its full sequence is Proline--tRNA ligase (571 aa).

Belongs to the class-II aminoacyl-tRNA synthetase family. ProS type 1 subfamily. As to quaternary structure, homodimer.

It is found in the cytoplasm. The enzyme catalyses tRNA(Pro) + L-proline + ATP = L-prolyl-tRNA(Pro) + AMP + diphosphate. Functionally, catalyzes the attachment of proline to tRNA(Pro) in a two-step reaction: proline is first activated by ATP to form Pro-AMP and then transferred to the acceptor end of tRNA(Pro). As ProRS can inadvertently accommodate and process non-cognate amino acids such as alanine and cysteine, to avoid such errors it has two additional distinct editing activities against alanine. One activity is designated as 'pretransfer' editing and involves the tRNA(Pro)-independent hydrolysis of activated Ala-AMP. The other activity is designated 'posttransfer' editing and involves deacylation of mischarged Ala-tRNA(Pro). The misacylated Cys-tRNA(Pro) is not edited by ProRS. The polypeptide is Proline--tRNA ligase (Psychromonas ingrahamii (strain DSM 17664 / CCUG 51855 / 37)).